Consider the following 356-residue polypeptide: Probable dual-specificity RNA methyltransferase RlmN (356 aa).

Catalysis depends on Glu-100, which acts as the Proton acceptor. One can recognise a Radical SAM core domain in the interval 106-340 (TNSRLTTCVS…VSLRASRGLD (235 aa)). Cys-113 and Cys-345 form a disulfide bridge. Cys-120, Cys-124, and Cys-127 together coordinate [4Fe-4S] cluster. Residues 167 to 168 (GE), Ser-197, 226 to 228 (SLH), and Asn-302 each bind S-adenosyl-L-methionine. Cys-345 acts as the S-methylcysteine intermediate in catalysis.

This sequence belongs to the radical SAM superfamily. RlmN family. The cofactor is [4Fe-4S] cluster.

It localises to the cytoplasm. It catalyses the reaction adenosine(2503) in 23S rRNA + 2 reduced [2Fe-2S]-[ferredoxin] + 2 S-adenosyl-L-methionine = 2-methyladenosine(2503) in 23S rRNA + 5'-deoxyadenosine + L-methionine + 2 oxidized [2Fe-2S]-[ferredoxin] + S-adenosyl-L-homocysteine. The catalysed reaction is adenosine(37) in tRNA + 2 reduced [2Fe-2S]-[ferredoxin] + 2 S-adenosyl-L-methionine = 2-methyladenosine(37) in tRNA + 5'-deoxyadenosine + L-methionine + 2 oxidized [2Fe-2S]-[ferredoxin] + S-adenosyl-L-homocysteine. Specifically methylates position 2 of adenine 2503 in 23S rRNA and position 2 of adenine 37 in tRNAs. The protein is Probable dual-specificity RNA methyltransferase RlmN of Prochlorococcus marinus (strain MIT 9211).